A 271-amino-acid chain; its full sequence is Type III pantothenate kinase (271 aa).

6-13 contacts ATP; that stretch reads DVRNTHTV. 109 to 112 contacts substrate; that stretch reads GADR. Asp111 acts as the Proton acceptor in catalysis. Asp131 is a binding site for K(+). ATP is bound at residue Ser134. Thr186 lines the substrate pocket.

The protein belongs to the type III pantothenate kinase family. As to quaternary structure, homodimer. It depends on NH4(+) as a cofactor. Requires K(+) as cofactor.

It is found in the cytoplasm. It catalyses the reaction (R)-pantothenate + ATP = (R)-4'-phosphopantothenate + ADP + H(+). The protein operates within cofactor biosynthesis; coenzyme A biosynthesis; CoA from (R)-pantothenate: step 1/5. Its function is as follows. Catalyzes the phosphorylation of pantothenate (Pan), the first step in CoA biosynthesis. This Mycobacteroides abscessus (strain ATCC 19977 / DSM 44196 / CCUG 20993 / CIP 104536 / JCM 13569 / NCTC 13031 / TMC 1543 / L948) (Mycobacterium abscessus) protein is Type III pantothenate kinase.